The sequence spans 166 residues: Crossover junction endodeoxyribonuclease RuvC (166 aa).

Catalysis depends on residues D11, E70, and D142. Residues D11, E70, and D142 each coordinate Mg(2+).

It belongs to the RuvC family. Homodimer which binds Holliday junction (HJ) DNA. The HJ becomes 2-fold symmetrical on binding to RuvC with unstacked arms; it has a different conformation from HJ DNA in complex with RuvA. In the full resolvosome a probable DNA-RuvA(4)-RuvB(12)-RuvC(2) complex forms which resolves the HJ. Requires Mg(2+) as cofactor.

It is found in the cytoplasm. It carries out the reaction Endonucleolytic cleavage at a junction such as a reciprocal single-stranded crossover between two homologous DNA duplexes (Holliday junction).. In terms of biological role, the RuvA-RuvB-RuvC complex processes Holliday junction (HJ) DNA during genetic recombination and DNA repair. Endonuclease that resolves HJ intermediates. Cleaves cruciform DNA by making single-stranded nicks across the HJ at symmetrical positions within the homologous arms, yielding a 5'-phosphate and a 3'-hydroxyl group; requires a central core of homology in the junction. The consensus cleavage sequence is 5'-(A/T)TT(C/G)-3'. Cleavage occurs on the 3'-side of the TT dinucleotide at the point of strand exchange. HJ branch migration catalyzed by RuvA-RuvB allows RuvC to scan DNA until it finds its consensus sequence, where it cleaves and resolves the cruciform DNA. The protein is Crossover junction endodeoxyribonuclease RuvC of Nitratidesulfovibrio vulgaris (strain DP4) (Desulfovibrio vulgaris).